The primary structure comprises 205 residues: Myb-related protein 305 (205 aa).

2 consecutive HTH myb-type domains span residues 10-62 and 63-117; these read DVEV…LNYL and RPDV…QKHM. DNA-binding regions (H-T-H motif) lie at residues 38 to 62 and 90 to 113; these read WNSLARSAGLKRTGKSCRLRWLNYL and WSKIAKTLPGRTDNEIKNYWRTRI.

In terms of tissue distribution, expressed only in flowers.

The protein resides in the nucleus. In terms of biological role, transcription factor. In Antirrhinum majus (Garden snapdragon), this protein is Myb-related protein 305.